The following is a 469-amino-acid chain: Ribonuclease Y (469 aa).

A helical transmembrane segment spans residues 6-26; sequence VTLILVGVIIFLFISLFFYVI. Residues 149 to 209 enclose the KH domain; the sequence is FSFTIKLENE…IRREKAKRTM (61 aa). In terms of domain architecture, HD spans 276–369; it reads VLLHCVEAAV…VKVVDKLSAS (94 aa).

The protein belongs to the RNase Y family.

The protein localises to the cell membrane. Endoribonuclease that initiates mRNA decay. This chain is Ribonuclease Y, found in Malacoplasma penetrans (strain HF-2) (Mycoplasma penetrans).